Here is a 204-residue protein sequence, read N- to C-terminus: uncharacterized protein (204 aa).

The interval phenylalanine 118–proline 169 is disordered.

This is an uncharacterized protein from Encephalitozoon cuniculi (strain GB-M1) (Microsporidian parasite).